A 332-amino-acid polypeptide reads, in one-letter code: 2-oxoglutarate-dependent dioxygenase FG08081 (332 aa).

Residues 176-280 (RSKSTLYFLH…RYSISYFLRA (105 aa)) enclose the Fe2OG dioxygenase domain. Fe cation contacts are provided by histidine 201, aspartate 203, and histidine 258. Residue arginine 271 participates in 2-oxoglutarate binding.

This sequence belongs to the iron/ascorbate-dependent oxidoreductase family. Fe(2+) serves as cofactor.

Its pathway is mycotoxin biosynthesis. Functionally, 2-oxoglutarate-dependent dioxygenase; part of the gene cluster that mediates the biosynthesis of butenolide, a mycotoxin that shows antibiotic activity but does not seem to play a major role in the spread of head blight in wheat. Butenolide is derived from glutamic acid via a 4-acetamido-2-butenoic acid intermediate. The predicted function of the NADH:flavin oxidoreductase FG08077, the cytochrome P450 monooxygenase FG08079, the decarboxylase FG08083, and the putative acetyltransferase FG08082 are consistent with this pathway, however, the respective activities of the butelonide biosynthesis cluster enzymes have still to be experimentally determined. The polypeptide is 2-oxoglutarate-dependent dioxygenase FG08081 (Gibberella zeae (strain ATCC MYA-4620 / CBS 123657 / FGSC 9075 / NRRL 31084 / PH-1) (Wheat head blight fungus)).